Here is a 242-residue protein sequence, read N- to C-terminus: Probable transcriptional regulatory protein XCC3027 (242 aa).

The protein belongs to the TACO1 family.

It localises to the cytoplasm. The chain is Probable transcriptional regulatory protein XCC3027 from Xanthomonas campestris pv. campestris (strain ATCC 33913 / DSM 3586 / NCPPB 528 / LMG 568 / P 25).